Consider the following 339-residue polypeptide: Probable G-protein coupled receptor 33 (339 aa).

Topologically, residues 1-30 are extracellular; the sequence is MDLINSSTHVINVSTSLTNSTGVPTPAPKT. N-linked (GlcNAc...) asparagine glycans are attached at residues Asn5, Asn12, and Asn19. A helical membrane pass occupies residues 31-53; it reads IIAASLFMAFIIGVISNGLYLWM. The Cytoplasmic segment spans residues 54-64; the sequence is LQFKMQRTVNT. A helical membrane pass occupies residues 65 to 86; the sequence is LLFFHLILSYFISTLILPFMAT. The Extracellular portion of the chain corresponds to 87–103; sequence SFLQDNHWVFGSVLCKA. A disulfide bridge links Cys101 with Cys179. Residues 104–124 form a helical membrane-spanning segment; that stretch reads FNSTLSVSMFASVFFLSAISV. The Cytoplasmic portion of the chain corresponds to 125–143; it reads ARYYLILHPVWSQQHRTPH. The chain crosses the membrane as a helical span at residues 144-165; that stretch reads WASRIALQIWISATILSIPYLV. Over 166–209 the chain is Extracellular; sequence FRTTHDDHKGRIKCQNNYIVSTDWESKEHQTLGQWIHAACFVGR. A helical transmembrane segment spans residues 210-230; sequence FLLGFLLPFLVIIFCYKRVAT. The Cytoplasmic portion of the chain corresponds to 231-246; the sequence is KMKEKGLFKSSKPFKV. A helical transmembrane segment spans residues 247 to 268; that stretch reads MVTAVISFFVCWMPYHVHSGLV. The Extracellular portion of the chain corresponds to 269 to 283; it reads LTKSQPLPLHLTLGL. Residues 284–303 traverse the membrane as a helical segment; it reads AVVTISFNTVVSPVLYLFTG. The Cytoplasmic portion of the chain corresponds to 304–339; sequence ENFKVFKKSILALFNSTFSDISSTERTQTLNSETEI.

The protein belongs to the G-protein coupled receptor 1 family. As to expression, expressed predominantly in lung, spleen and testis.

The protein localises to the cell membrane. Its function is as follows. Orphan receptor; could be a chemoattractant receptor. In Mus musculus (Mouse), this protein is Probable G-protein coupled receptor 33 (Gpr33).